The sequence spans 361 residues: Protein RecA (361 aa).

Position 77-84 (77-84 (GPESSGKT)) interacts with ATP.

This sequence belongs to the RecA family.

Its subcellular location is the cytoplasm. Functionally, can catalyze the hydrolysis of ATP in the presence of single-stranded DNA, the ATP-dependent uptake of single-stranded DNA by duplex DNA, and the ATP-dependent hybridization of homologous single-stranded DNAs. It interacts with LexA causing its activation and leading to its autocatalytic cleavage. This is Protein RecA from Brucella anthropi (strain ATCC 49188 / DSM 6882 / CCUG 24695 / JCM 21032 / LMG 3331 / NBRC 15819 / NCTC 12168 / Alc 37) (Ochrobactrum anthropi).